Consider the following 218-residue polypeptide: Small ribosomal subunit protein uS7m (218 aa).

The transit peptide at 1–19 (MSLLGRIAEKTSRLSCLRL) directs the protein to the mitochondrion.

It belongs to the universal ribosomal protein uS7 family. As to quaternary structure, component of the mitochondrial ribosome small subunit (28S) which comprises a 12S rRNA and about 30 distinct proteins.

It is found in the mitochondrion. In Drosophila melanogaster (Fruit fly), this protein is Small ribosomal subunit protein uS7m (mRpS7).